Consider the following 596-residue polypeptide: MENNAKDNQIMDSWEEGSGDKSSDISSALDIIEFILSTDSQENTADSNEVNTGNKRLSTTIYQLESKTTETSKENSGSVNENRQLGASHERATETKNRNVNQETIQGGNRGRSSSDSRAEIMVTRGISRSSPDPNNGTQIQESIDYNEVGEMDKDSAKREMRQSKDVPVKVSRSDAIPPTKQDGNGDDGRSMESISTFDSGYTSIVTAATLDDEEELLMKNTRPKRYQSTPQEDDKGIKKGVGKPEDTNKQSPILDYELNSKGSKRNQKTLKISTTTGESTRPQSGSQGKRITSWNILNSESGSRTESTSQNSQIPTSGKSNTVGPGRTTLESRIKTQKTDGKEREDTEESTRFTERAITLLQNLGVIQSAAKLDLYQDKRVVCVANVLNNADTASKIDFLAGLMIGVSMDHDTKLNQIQNEILSLKTDLKKMDESHRRLIENQKEQLSLITSLISNLKIMTERGGKKDQPENSGRTPMIKTKAKEEKIKKVRFDPLMETQGIEKNIPDLYRSIEKTPENDIQIKSDINRSNDESNATRLVPKRTSNTMRSLIIIINNSNLSSRAKQSYINELKLCKSDEEVSELMDMFNEDVSSQ.

Polar residues-rich tracts occupy residues 1–11, 38–66, and 74–85; these read MENNAKDNQIM, TDSQ…QLES, and ENSGSVNENRQL. Disordered stretches follow at residues 1-25, 38-196, and 220-352; these read MENN…SSDI, TDSQ…ESIS, and KNTR…EEST. The tract at residues 33 to 41 is N0 binding; the sequence is EFILSTDSQ. Positions 88–97 are enriched in basic and acidic residues; it reads SHERATETKN. A compositionally biased stretch (polar residues) spans 127–144; that stretch reads ISRSSPDPNNGTQIQESI. 2 stretches are compositionally biased toward basic and acidic residues: residues 151 to 168 and 233 to 249; these read EMDK…KDVP and EDDK…EDTN. A compositionally biased stretch (polar residues) spans 270–324; the sequence is TLKISTTTGESTRPQSGSQGKRITSWNILNSESGSRTESTSQNSQIPTSGKSNTV. Over residues 331–352 the composition is skewed to basic and acidic residues; that stretch reads LESRIKTQKTDGKEREDTEEST. A multimerization region spans residues 374–441; sequence LDLYQDKRVV…KMDESHRRLI (68 aa). The stretch at 416 to 436 forms a coiled coil; that stretch reads LNQIQNEILSLKTDLKKMDES. The l protein binding stretch occupies residues 442 to 475; it reads ENQKEQLSLITSLISNLKIMTERGGKKDQPENSG.

This sequence belongs to the respirovirus P protein family. In terms of assembly, homotetramer. Interacts (via multimerization domain) with polymerase L; this interaction forms the polymerase complex. Interacts (via N-terminus) with N0; this interaction allows P to chaperon N0 before encapsidation and form the N-P complex. Interacts (via C-terminus) with N-RNA template; this interaction positions the polymerase on the template.

In terms of biological role, essential cofactor of the RNA polymerase L that plays a central role in the transcription and replication by forming the polymerase complex with RNA polymerase L and recruiting L to the genomic N-RNA template for RNA synthesis. Also plays a central role in the encapsidation of nascent RNA chains by forming the encapsidation complex with the nucleocapsid protein N (N-P complex). Acts as a chaperone for newly synthesized free N protein, so-called N0, allowing encapsidation of nascent RNA chains during replication. The nucleoprotein protein N prevents excessive phosphorylation of P, which leads to down-regulation of viral transcription/ replication. Participates, together with N, in the formation of viral factories (viroplasms), which are large inclusions in the host cytoplasm where replication takes place. Recruits host PI4KB and remodel the host endoplasmic reticulum membrane to form viral replication factories. In Bovine parainfluenza 3 virus (BPIV-3), this protein is Phosphoprotein (P/V/D).